A 188-amino-acid chain; its full sequence is Pro-adrenomedullin (188 aa).

The N-terminal stretch at 1–21 is a signal peptide; it reads MKLVPVALLYLGSLAFLGVDT. Arginine 41 carries the post-translational modification Arginine amide. The propeptide occupies 45 to 92; it reads ELRESSSYPTGLADVKAGPVQTLIRPQDVKGASRSPQASSPDAARIRV. The interval 69-89 is disordered; it reads RPQDVKGASRSPQASSPDAAR. Residues cysteine 110 and cysteine 115 are joined by a disulfide bond. The tract at residues 129–175 is disordered; it reads DKDKDGSAPRSKISPQGYGRRRRRSLPEAGLGRTLLQPPEPKLRGAP. At tyrosine 146 the chain carries Tyrosine amide. The propeptide at 153–188 is preproAM C-terminal fragment; sequence SLPEAGLGRTLLQPPEPKLRGAPDSRVHQVLATLRI.

This sequence belongs to the adrenomedullin family.

The protein localises to the secreted. Adrenomedullin/ADM and proadrenomedullin N-20 terminal peptide/PAMP are peptide hormones that act as potent hypotensive and vasodilatator agents. Numerous actions have been reported most related to the physiologic control of fluid and electrolyte homeostasis. Its function is as follows. ADM function is mediated by the CALCRL-RAMP2 and CALCRL-RAMP3 receptor complexes with ADM showing the highest potency for the CALCRL-RAMP2 complex. In Bos taurus (Bovine), this protein is Pro-adrenomedullin (ADM).